We begin with the raw amino-acid sequence, 198 residues long: Probable GTP-binding protein EngB (198 aa).

Positions 27–198 (DLPEVALAGR…ESWDTILSEL (172 aa)) constitute an EngB-type G domain. GTP is bound by residues 35-42 (GRSNVGKS), 62-66 (GKTQL), 80-83 (DVPG), 147-150 (TKAD), and 179-181 (FSS). Residues Ser42 and Thr64 each coordinate Mg(2+).

This sequence belongs to the TRAFAC class TrmE-Era-EngA-EngB-Septin-like GTPase superfamily. EngB GTPase family. Mg(2+) serves as cofactor.

In terms of biological role, necessary for normal cell division and for the maintenance of normal septation. This is Probable GTP-binding protein EngB from Streptococcus agalactiae serotype III (strain NEM316).